The chain runs to 695 residues: Follicle-stimulating hormone receptor (695 aa).

Residues 1-17 (MALFLVALLAFLSLGSG) form the signal peptide. 2 cysteine pairs are disulfide-bonded: cysteine 18–cysteine 25 and cysteine 23–cysteine 32. The region spanning 18 to 46 (CHHRLCHCSNGVFLCQDSKVTEMPSDLPR) is the LRRNT domain. Over 18-366 (CHHRLCHCSN…EDIMGYDILR (349 aa)) the chain is Extracellular. LRR repeat units lie at residues 48-70 (AVEL…SGFG), 71-93 (DLEK…VFSN), 96-118 (KLHE…AFQN), 121-142 (NLRY…HKIQ), 143-167 (SLQK…SFMG), 171-192 (ESMI…AFNG), 194-216 (QLDE…VFQG), 219-239 (GPVI…YGLE), and 240-262 (NLKK…EKFV). Asparagine 191 and asparagine 199 each carry an N-linked (GlcNAc...) asparagine glycan. 4 disulfides stabilise this stretch: cysteine 275/cysteine 346, cysteine 276/cysteine 292, cysteine 276/cysteine 356, and cysteine 292/cysteine 338. N-linked (GlcNAc...) asparagine glycosylation occurs at asparagine 293. Tyrosine 335 bears the Sulfotyrosine mark. A helical transmembrane segment spans residues 367–387 (VLIWFISILAITGNILVLVIL). Residues 388-398 (ITSQYKLTVPR) are Cytoplasmic-facing. The chain crosses the membrane as a helical span at residues 399–421 (FLMCNLAFADLCIGIYLLLIASV). Residues 422–443 (DVHTKSQYHNYAIDWQTGAGCD) lie on the Extracellular side of the membrane. A disulfide bridge links cysteine 442 with cysteine 517. A helical transmembrane segment spans residues 444–465 (AAGFFTVFASELSVYTLTAITL). Residues 466–485 (ERWHTITHAMQLECKVHVRH) are Cytoplasmic-facing. A helical membrane pass occupies residues 486-508 (AASIMLVGWVFAFAVALFPIFGI). Over 509–528 (SSYMKVSICLPMDIDSPLSQ) the chain is Extracellular. Residues 529–550 (LYVMSLLVLNVLAFVVICGCYT) traverse the membrane as a helical segment. Over 551–573 (HIYLTVRNPNITSSSSDTKIAKR) the chain is Cytoplasmic. Residues 574–597 (MAMLIFTDFLCMAPISFFAISASL) traverse the membrane as a helical segment. The Extracellular segment spans residues 598 to 608 (KVPLITVSKSK). The helical transmembrane segment at 609 to 630 (ILLVLFYPINSCANPFLYAIFT) threads the bilayer. Residues 631–695 (RNFRRDFFIL…LIPLRHLAKN (65 aa)) are Cytoplasmic-facing.

The protein belongs to the G-protein coupled receptor 1 family. FSH/LSH/TSH subfamily. As to quaternary structure, homotrimer. Functions as a homotrimer binding the FSH hormone heterodimer composed of CGA and FSHB. Interacts with ARRB2. Interacts with APPL2; interaction is independent of follicle stimulating hormone stimulation. Post-translationally, N-glycosylated; indirectly required for FSH-binding, possibly via a conformational change that allows high affinity binding of hormone. In terms of processing, sulfated. As to expression, isoform FSH-R3 is expressed in ovary and testis, but not in kidney (at protein level).

It localises to the cell membrane. In terms of biological role, g protein-coupled receptor for follitropin, the follicle-stimulating hormone. The activity of isoform FSH-R1 is mediated by G proteins which activate adenylate cyclase. Isoform FSH-R2 and isoform FSH-R3 also bind FSH, but this does not result in activation of adenylate cyclase. Isoform FSH-R3 may be involved in calcium signaling. Through cAMP production activates the downstream PI3K-AKT and ERK1/ERK2 signaling pathways. This Ovis aries (Sheep) protein is Follicle-stimulating hormone receptor (FSHR).